Here is a 158-residue protein sequence, read N- to C-terminus: NAD(P)H-quinone oxidoreductase subunit J, chloroplastic (158 aa).

It belongs to the complex I 30 kDa subunit family. In terms of assembly, NDH is composed of at least 16 different subunits, 5 of which are encoded in the nucleus.

It is found in the plastid. It localises to the chloroplast thylakoid membrane. It carries out the reaction a plastoquinone + NADH + (n+1) H(+)(in) = a plastoquinol + NAD(+) + n H(+)(out). It catalyses the reaction a plastoquinone + NADPH + (n+1) H(+)(in) = a plastoquinol + NADP(+) + n H(+)(out). Functionally, NDH shuttles electrons from NAD(P)H:plastoquinone, via FMN and iron-sulfur (Fe-S) centers, to quinones in the photosynthetic chain and possibly in a chloroplast respiratory chain. The immediate electron acceptor for the enzyme in this species is believed to be plastoquinone. Couples the redox reaction to proton translocation, and thus conserves the redox energy in a proton gradient. This Olimarabidopsis pumila (Dwarf rocket) protein is NAD(P)H-quinone oxidoreductase subunit J, chloroplastic.